Here is a 222-residue protein sequence, read N- to C-terminus: UPF0758 protein YicR (222 aa).

The MPN domain maps to 100–222 (PLLSPEMTRE…YVSFAERGWI (123 aa)). The Zn(2+) site is built by His171, His173, and Asp184. The JAMM motif motif lies at 171-184 (HNHPSGCAEPSKAD).

It belongs to the UPF0758 family. YicR subfamily.

The chain is UPF0758 protein YicR from Shigella dysenteriae serotype 1 (strain Sd197).